Here is a 360-residue protein sequence, read N- to C-terminus: Phosphoserine aminotransferase (360 aa).

Residue R41 participates in L-glutamate binding. Residues W101, T152, D172, and Q195 each contribute to the pyridoxal 5'-phosphate site. K196 is modified (N6-(pyridoxal phosphate)lysine). Residue N237–T238 coordinates pyridoxal 5'-phosphate.

This sequence belongs to the class-V pyridoxal-phosphate-dependent aminotransferase family. SerC subfamily. In terms of assembly, homodimer. The cofactor is pyridoxal 5'-phosphate.

The protein resides in the cytoplasm. The enzyme catalyses O-phospho-L-serine + 2-oxoglutarate = 3-phosphooxypyruvate + L-glutamate. It catalyses the reaction 4-(phosphooxy)-L-threonine + 2-oxoglutarate = (R)-3-hydroxy-2-oxo-4-phosphooxybutanoate + L-glutamate. The protein operates within amino-acid biosynthesis; L-serine biosynthesis; L-serine from 3-phospho-D-glycerate: step 2/3. Its pathway is cofactor biosynthesis; pyridoxine 5'-phosphate biosynthesis; pyridoxine 5'-phosphate from D-erythrose 4-phosphate: step 3/5. Functionally, catalyzes the reversible conversion of 3-phosphohydroxypyruvate to phosphoserine and of 3-hydroxy-2-oxo-4-phosphonooxybutanoate to phosphohydroxythreonine. In Burkholderia ambifaria (strain MC40-6), this protein is Phosphoserine aminotransferase.